The sequence spans 274 residues: Dermonecrotic toxin SdSicTox-betaIIB1bi (274 aa).

The active site involves H5. Residues E25 and D27 each coordinate Mg(2+). Catalysis depends on H41, which acts as the Nucleophile. 2 cysteine pairs are disulfide-bonded: C45–C51 and C47–C190. D85 is a Mg(2+) binding site.

Belongs to the arthropod phospholipase D family. Class II subfamily. Mg(2+) serves as cofactor. In terms of tissue distribution, expressed by the venom gland.

It is found in the secreted. It carries out the reaction an N-(acyl)-sphingosylphosphocholine = an N-(acyl)-sphingosyl-1,3-cyclic phosphate + choline. The enzyme catalyses an N-(acyl)-sphingosylphosphoethanolamine = an N-(acyl)-sphingosyl-1,3-cyclic phosphate + ethanolamine. The catalysed reaction is a 1-acyl-sn-glycero-3-phosphocholine = a 1-acyl-sn-glycero-2,3-cyclic phosphate + choline. It catalyses the reaction a 1-acyl-sn-glycero-3-phosphoethanolamine = a 1-acyl-sn-glycero-2,3-cyclic phosphate + ethanolamine. Functionally, dermonecrotic toxins cleave the phosphodiester linkage between the phosphate and headgroup of certain phospholipids (sphingolipid and lysolipid substrates), forming an alcohol (often choline) and a cyclic phosphate. This toxin acts on sphingomyelin (SM). It may also act on ceramide phosphoethanolamine (CPE), lysophosphatidylcholine (LPC) and lysophosphatidylethanolamine (LPE), but not on lysophosphatidylserine (LPS), and lysophosphatidylglycerol (LPG). It acts by transphosphatidylation, releasing exclusively cyclic phosphate products as second products. Induces dermonecrosis, hemolysis, increased vascular permeability, edema, inflammatory response, and platelet aggregation. The protein is Dermonecrotic toxin SdSicTox-betaIIB1bi of Sicarius cf. damarensis (strain GJB-2008) (Six-eyed sand spider).